We begin with the raw amino-acid sequence, 391 residues long: Processive diacylglycerol beta-glucosyltransferase (391 aa).

It belongs to the glycosyltransferase 28 family. UgtP subfamily.

The protein localises to the cell membrane. It carries out the reaction a 1,2-diacyl-3-O-(beta-D-glucopyranosyl)-sn-glycerol + UDP-alpha-D-glucose = a 1,2-diacyl-3-O-(beta-D-Glc-(1-&gt;6)-beta-D-Glc)-sn-glycerol + UDP + H(+). The catalysed reaction is a 1,2-diacyl-sn-glycerol + UDP-alpha-D-glucose = a 1,2-diacyl-3-O-(beta-D-glucopyranosyl)-sn-glycerol + UDP + H(+). The protein operates within glycolipid metabolism; diglucosyl-diacylglycerol biosynthesis. Its function is as follows. Processive glucosyltransferase involved in the biosynthesis of both the bilayer- and non-bilayer-forming membrane glucolipids. Is able to successively transfer two glucosyl residues to diacylglycerol (DAG), thereby catalyzing the formation of beta-monoglucosyl-DAG (3-O-(beta-D-glucopyranosyl)-1,2-diacyl-sn-glycerol) and beta-diglucosyl-DAG (3-O-(beta-D-glucopyranosyl-beta-(1-&gt;6)-D-glucopyranosyl)-1,2-diacyl-sn-glycerol). Beta-diglucosyl-DAG is the predominant glycolipid found in Bacillales and is also used as a membrane anchor for lipoteichoic acid (LTA). The polypeptide is Processive diacylglycerol beta-glucosyltransferase (Staphylococcus aureus (strain Mu3 / ATCC 700698)).